A 188-amino-acid chain; its full sequence is Protein crossbronx-like (188 aa).

In terms of domain architecture, UBC core spans 15 to 174; that stretch reads KQGYHILAEY…ANQVVKLHCG (160 aa).

It belongs to the ubiquitin-conjugating enzyme family. FTS subfamily.

This is Protein crossbronx-like from Drosophila simulans (Fruit fly).